The chain runs to 702 residues: Elongation factor G (702 aa).

In terms of domain architecture, tr-type G spans 8-290; the sequence is ARYRNIGISA…AVIEYLPAPT (283 aa). Residues 17–24, 88–92, and 142–145 contribute to the GTP site; these read AHIDAGKT, DTPGH, and NKMD.

It belongs to the TRAFAC class translation factor GTPase superfamily. Classic translation factor GTPase family. EF-G/EF-2 subfamily.

The protein localises to the cytoplasm. Catalyzes the GTP-dependent ribosomal translocation step during translation elongation. During this step, the ribosome changes from the pre-translocational (PRE) to the post-translocational (POST) state as the newly formed A-site-bound peptidyl-tRNA and P-site-bound deacylated tRNA move to the P and E sites, respectively. Catalyzes the coordinated movement of the two tRNA molecules, the mRNA and conformational changes in the ribosome. In Photorhabdus laumondii subsp. laumondii (strain DSM 15139 / CIP 105565 / TT01) (Photorhabdus luminescens subsp. laumondii), this protein is Elongation factor G.